Consider the following 200-residue polypeptide: Large ribosomal subunit protein uL4 (200 aa).

Positions 44–71 (AQKTRAEVSGGGKKPWRQKGTGRARAGS) are disordered.

The protein belongs to the universal ribosomal protein uL4 family. As to quaternary structure, part of the 50S ribosomal subunit.

In terms of biological role, one of the primary rRNA binding proteins, this protein initially binds near the 5'-end of the 23S rRNA. It is important during the early stages of 50S assembly. It makes multiple contacts with different domains of the 23S rRNA in the assembled 50S subunit and ribosome. Its function is as follows. Forms part of the polypeptide exit tunnel. In Psychrobacter sp. (strain PRwf-1), this protein is Large ribosomal subunit protein uL4.